We begin with the raw amino-acid sequence, 112 residues long: Large ribosomal subunit protein eL22 (112 aa).

The protein belongs to the eukaryotic ribosomal protein eL22 family. Component of the large ribosomal subunit.

It localises to the cytoplasm. In Encephalitozoon cuniculi (strain GB-M1) (Microsporidian parasite), this protein is Large ribosomal subunit protein eL22 (RPL22).